The chain runs to 198 residues: Chromophore lyase CpcT/CpeT 3 (198 aa).

Belongs to the CpcT/CpeT biliprotein lyase family.

Functionally, covalently attaches a chromophore to Cys residue(s) of phycobiliproteins. The chain is Chromophore lyase CpcT/CpeT 3 from Synechococcus sp. (strain JA-3-3Ab) (Cyanobacteria bacterium Yellowstone A-Prime).